Reading from the N-terminus, the 455-residue chain is Phosphoglucosamine mutase (455 aa).

The active-site Phosphoserine intermediate is the Ser107. Positions 107, 247, 249, and 251 each coordinate Mg(2+). Phosphoserine is present on Ser107.

The protein belongs to the phosphohexose mutase family. It depends on Mg(2+) as a cofactor. In terms of processing, activated by phosphorylation.

It catalyses the reaction alpha-D-glucosamine 1-phosphate = D-glucosamine 6-phosphate. In terms of biological role, catalyzes the conversion of glucosamine-6-phosphate to glucosamine-1-phosphate. In Leuconostoc citreum (strain KM20), this protein is Phosphoglucosamine mutase.